A 242-amino-acid polypeptide reads, in one-letter code: Putative S-adenosyl-L-methionine-dependent methyltransferase Mmcs_0580 (242 aa).

S-adenosyl-L-methionine is bound by residues Asp104 and 134-135 (DL).

The protein belongs to the UPF0677 family.

Exhibits S-adenosyl-L-methionine-dependent methyltransferase activity. The protein is Putative S-adenosyl-L-methionine-dependent methyltransferase Mmcs_0580 of Mycobacterium sp. (strain MCS).